The sequence spans 180 residues: Large ribosomal subunit protein uL5 (180 aa).

The protein belongs to the universal ribosomal protein uL5 family. As to quaternary structure, part of the 50S ribosomal subunit; part of the 5S rRNA/L5/L18/L25 subcomplex. Contacts the 5S rRNA and the P site tRNA. Forms a bridge to the 30S subunit in the 70S ribosome.

This is one of the proteins that bind and probably mediate the attachment of the 5S RNA into the large ribosomal subunit, where it forms part of the central protuberance. In the 70S ribosome it contacts protein S13 of the 30S subunit (bridge B1b), connecting the 2 subunits; this bridge is implicated in subunit movement. Contacts the P site tRNA; the 5S rRNA and some of its associated proteins might help stabilize positioning of ribosome-bound tRNAs. In Streptococcus pneumoniae (strain JJA), this protein is Large ribosomal subunit protein uL5.